Reading from the N-terminus, the 204-residue chain is Shikimate kinase (204 aa).

Residue 35–40 (ASGKST) coordinates ATP. Ser39 contacts Mg(2+). Substrate is bound by residues Asp57, Arg81, and Gly103. An ATP-binding site is contributed by Arg142. A substrate-binding site is contributed by Arg169.

It belongs to the shikimate kinase family. In terms of assembly, monomer. The cofactor is Mg(2+).

It localises to the cytoplasm. The enzyme catalyses shikimate + ATP = 3-phosphoshikimate + ADP + H(+). It functions in the pathway metabolic intermediate biosynthesis; chorismate biosynthesis; chorismate from D-erythrose 4-phosphate and phosphoenolpyruvate: step 5/7. Functionally, catalyzes the specific phosphorylation of the 3-hydroxyl group of shikimic acid using ATP as a cosubstrate. The sequence is that of Shikimate kinase from Salinibacter ruber (strain DSM 13855 / M31).